A 142-amino-acid polypeptide reads, in one-letter code: Succinate dehydrogenase assembly factor 2, mitochondrial (142 aa).

It belongs to the SDHAF2 family. Interacts with the flavoprotein subunit within the SDH catalytic dimer.

The protein resides in the mitochondrion matrix. Its function is as follows. Plays an essential role in the assembly of succinate dehydrogenase (SDH), an enzyme complex (also referred to as respiratory complex II) that is a component of both the tricarboxylic acid (TCA) cycle and the mitochondrial electron transport chain, and which couples the oxidation of succinate to fumarate with the reduction of ubiquinone (coenzyme Q) to ubiquinol. Required for flavinylation (covalent attachment of FAD) of the flavoprotein subunit of the SDH catalytic dimer. The sequence is that of Succinate dehydrogenase assembly factor 2, mitochondrial from Debaryomyces hansenii (strain ATCC 36239 / CBS 767 / BCRC 21394 / JCM 1990 / NBRC 0083 / IGC 2968) (Yeast).